Consider the following 136-residue polypeptide: uncharacterized protein (136 aa).

The chain crosses the membrane as a helical span at residues 102–118 (FVIVFFFFSFSLSISCV).

Its subcellular location is the membrane. This is an uncharacterized protein from Saccharomyces cerevisiae (strain ATCC 204508 / S288c) (Baker's yeast).